Here is a 178-residue protein sequence, read N- to C-terminus: Small ribosomal subunit protein uS5 (178 aa).

The region spanning 15–78 is the S5 DRBM domain; the sequence is FEEKIIEIRR…ADAKKNVIEV (64 aa).

Belongs to the universal ribosomal protein uS5 family. Part of the 30S ribosomal subunit. Contacts proteins S4 and S8.

Functionally, with S4 and S12 plays an important role in translational accuracy. Its function is as follows. Located at the back of the 30S subunit body where it stabilizes the conformation of the head with respect to the body. The chain is Small ribosomal subunit protein uS5 from Thermotoga neapolitana (strain ATCC 49049 / DSM 4359 / NBRC 107923 / NS-E).